The following is a 249-amino-acid chain: 5'-nucleotidase SurE (249 aa).

A divalent metal cation contacts are provided by Asp-8, Asp-9, Ser-39, and Asn-91.

It belongs to the SurE nucleotidase family. Requires a divalent metal cation as cofactor.

It localises to the cytoplasm. The catalysed reaction is a ribonucleoside 5'-phosphate + H2O = a ribonucleoside + phosphate. In terms of biological role, nucleotidase that shows phosphatase activity on nucleoside 5'-monophosphates. The polypeptide is 5'-nucleotidase SurE (Vesicomyosocius okutanii subsp. Calyptogena okutanii (strain HA)).